A 239-amino-acid chain; its full sequence is Serine protease SplC (239 aa).

A signal peptide spans 1-36 (MNKNIVIKSMAALAILTSVTGINAAVVDETQQIANA). Active-site charge relay system residues include histidine 75, aspartate 113, and serine 193.

Belongs to the peptidase S1B family.

The protein localises to the secreted. In Staphylococcus aureus (strain bovine RF122 / ET3-1), this protein is Serine protease SplC (splC).